A 383-amino-acid chain; its full sequence is MSFNSSHLLPPQEDLPLRHFTDQSQQPPPQRHFSETPSLVTASFLNLPTTLTTADSDLAPPHRNGDNSVADTNPRWLSFHSEMQNTGEVRSEVIDGVNADGETILGVVGGEDWRSASYKAAILRHPMYEQLLAAHVACLRVATPVDQIPRIDAQLSQLHTVAAKYSTLGVVVDNKELDHFMSHYVVLLCSFKEQLQHHVCVHAMEAITACWEIEQSLQSLTGVSPSESNGKTMSDDEDDNQVESEVNMFDGSLDGSDCLMGFGPLVPTERERSLMERVKKELKHELKQGFKEKIVDIREEIMRKRRAGKLPGDTTSVLKEWWRTHSKWPYPTEEDKAKLVQETGLQLKQINNWFINQRKRNWNSNSSTSSTLTKNKRKRTGKS.

Disordered regions lie at residues 1-35 and 52-73; these read MSFN…HFSE and TTAD…ADTN. The ELK domain occupies 281 to 301; sequence ELKHELKQGFKEKIVDIREEI. Positions 302 to 365 form a DNA-binding region, homeobox; TALE-type; that stretch reads MRKRRAGKLP…NQRKRNWNSN (64 aa). The interval 361–383 is disordered; sequence NWNSNSSTSSTLTKNKRKRTGKS. The span at 362–373 shows a compositional bias: low complexity; that stretch reads WNSNSSTSSTLT. Residues 374–383 show a composition bias toward basic residues; it reads KNKRKRTGKS.

It belongs to the TALE/KNOX homeobox family. In terms of assembly, may form heterodimeric complex with the TALE/BELL protein BEL1, BLH1 and BLH2. Interacts with OFP1, OFP2, OFP3 and OFP4.

It is found in the nucleus. This is Homeobox protein knotted-1-like 5 (KNAT5) from Arabidopsis thaliana (Mouse-ear cress).